The chain runs to 66 residues: MVAKQRIRMANEKHSKNITQRGNVAKTSRNAPEEKASVGPWLLALFIFVVCGSAIFQIIQSIRMGM.

A disordered region spans residues 1 to 31 (MVAKQRIRMANEKHSKNITQRGNVAKTSRNA). Positions 17–30 (NITQRGNVAKTSRN) are enriched in polar residues. Residues 39–59 (GPWLLALFIFVVCGSAIFQII) form a helical membrane-spanning segment.

The protein belongs to the RAMP4 family. As to quaternary structure, interacts with SEC61B, SEC61A1 and the SEC61 complex. Interacts with CANX.

It is found in the membrane. It localises to the endoplasmic reticulum membrane. In terms of biological role, interacts with target proteins during their translocation into the lumen of the endoplasmic reticulum. Protects unfolded target proteins against degradation during ER stress. May facilitate glycosylation of target proteins after termination of ER stress. May modulate the use of N-glycosylation sites on target proteins. In Bos taurus (Bovine), this protein is Stress-associated endoplasmic reticulum protein 1 (SERP1).